The chain runs to 70 residues: Large ribosomal subunit protein bL32c (70 aa).

Disordered stretches follow at residues 1 to 20 (MAVPKKRTSRSKKKIRKNVR) and 51 to 70 (NDDSSGSSESKLTAIDLDDP). The segment covering 52–61 (DDSSGSSESK) has biased composition (polar residues).

The protein belongs to the bacterial ribosomal protein bL32 family.

It is found in the plastid. Its subcellular location is the chloroplast. This chain is Large ribosomal subunit protein bL32c (rpl32), found in Pinus thunbergii (Japanese black pine).